Here is a 446-residue protein sequence, read N- to C-terminus: Chromosomal replication initiator protein DnaA (446 aa).

Positions 1-92 (MENISDLWNS…SQAEEEIDLP (92 aa)) are domain I, interacts with DnaA modulators. The tract at residues 93-109 (PSKPNAAQDDSNHLPQS) is domain II. Positions 110–326 (MLNPKYTFDT…GALIRVVAYS (217 aa)) are domain III, AAA+ region. Residues G154, G156, K157, and T158 each contribute to the ATP site. The segment at 327-446 (SLINKDINAD…QVEEINDILK (120 aa)) is domain IV, binds dsDNA.

Belongs to the DnaA family. As to quaternary structure, oligomerizes as a right-handed, spiral filament on DNA at oriC.

The protein resides in the cytoplasm. In terms of biological role, plays an essential role in the initiation and regulation of chromosomal replication. ATP-DnaA binds to the origin of replication (oriC) to initiate formation of the DNA replication initiation complex once per cell cycle. Binds the DnaA box (a 9 base pair repeat at the origin) and separates the double-stranded (ds)DNA. Forms a right-handed helical filament on oriC DNA; dsDNA binds to the exterior of the filament while single-stranded (ss)DNA is stabiized in the filament's interior. The ATP-DnaA-oriC complex binds and stabilizes one strand of the AT-rich DNA unwinding element (DUE), permitting loading of DNA polymerase. After initiation quickly degrades to an ADP-DnaA complex that is not apt for DNA replication. Binds acidic phospholipids. The sequence is that of Chromosomal replication initiator protein DnaA from Bacillus cereus (strain 03BB102).